Here is a 377-residue protein sequence, read N- to C-terminus: Succinyl-diaminopimelate desuccinylase (377 aa).

H66 lines the Zn(2+) pocket. D68 is an active-site residue. D99 lines the Zn(2+) pocket. E133 acts as the Proton acceptor in catalysis. 3 residues coordinate Zn(2+): E134, E162, and H348.

Belongs to the peptidase M20A family. DapE subfamily. Homodimer. It depends on Zn(2+) as a cofactor. Co(2+) serves as cofactor.

It catalyses the reaction N-succinyl-(2S,6S)-2,6-diaminopimelate + H2O = (2S,6S)-2,6-diaminopimelate + succinate. It participates in amino-acid biosynthesis; L-lysine biosynthesis via DAP pathway; LL-2,6-diaminopimelate from (S)-tetrahydrodipicolinate (succinylase route): step 3/3. Catalyzes the hydrolysis of N-succinyl-L,L-diaminopimelic acid (SDAP), forming succinate and LL-2,6-diaminopimelate (DAP), an intermediate involved in the bacterial biosynthesis of lysine and meso-diaminopimelic acid, an essential component of bacterial cell walls. This chain is Succinyl-diaminopimelate desuccinylase, found in Chromobacterium violaceum (strain ATCC 12472 / DSM 30191 / JCM 1249 / CCUG 213 / NBRC 12614 / NCIMB 9131 / NCTC 9757 / MK).